Consider the following 199-residue polypeptide: GTP cyclohydrolase 1 (199 aa).

The Zn(2+) site is built by Cys-89, His-92, and Cys-161.

This sequence belongs to the GTP cyclohydrolase I family. Toroid-shaped homodecamer, composed of two pentamers of five dimers.

It catalyses the reaction GTP + H2O = 7,8-dihydroneopterin 3'-triphosphate + formate + H(+). The protein operates within cofactor biosynthesis; 7,8-dihydroneopterin triphosphate biosynthesis; 7,8-dihydroneopterin triphosphate from GTP: step 1/1. This is GTP cyclohydrolase 1 from Bifidobacterium longum (strain NCC 2705).